A 188-amino-acid polypeptide reads, in one-letter code: Mediator of RNA polymerase II transcription subunit 29 (188 aa).

Composition is skewed to low complexity over residues methionine 1–proline 23 and valine 30–glutamine 43. Residues methionine 1–glutamine 43 are disordered.

Belongs to the Mediator complex subunit 29 family. As to quaternary structure, component of the Mediator complex. Self-associates. Interacts with dsx.

The protein localises to the nucleus. Functionally, component of the Mediator complex, a coactivator involved in the regulated transcription of nearly all RNA polymerase II-dependent genes. Mediator functions as a bridge to convey information from gene-specific regulatory proteins to the basal RNA polymerase II transcription machinery. Mediator is recruited to promoters by direct interactions with regulatory proteins and serves as a scaffold for the assembly of a functional preinitiation complex with RNA polymerase II and the general transcription factors. Required for female somatic sexual development. This is Mediator of RNA polymerase II transcription subunit 29 (ix) from Drosophila melanogaster (Fruit fly).